We begin with the raw amino-acid sequence, 1435 residues long: Gag-Pol polyprotein (1435 aa).

G2 carries the N-myristoyl glycine; by host lipid modification. An interaction with Gp41 region spans residues V7 to L31. Residues L8–R43 form an interaction with host CALM1 region. The tract at residues K12 to I19 is interaction with host AP3D1. Residues D14–H33 form an interaction with membrane phosphatidylinositol 4,5-bisphosphate and RNA region. Residues W16 to R22 carry the Nuclear export signal motif. A Nuclear localization signal motif is present at residues K26–K32. Residues E73–S77 are interaction with membrane phosphatidylinositol 4,5-bisphosphate. Residues E102 to V128 form a disordered region. Position 132 is a phosphotyrosine; by host (Y132). An interaction with human PPIA/CYPA and NUP153 region spans residues N189–Q227. The segment at Y277–L363 is dimerization/Multimerization of capsid protein p24. 2 consecutive CCHC-type zinc fingers follow at residues I391–A408 and K412–E429. The tract at residues P489–L493 is dimerization of protease. Residues K508–L577 form the Peptidase A2 domain. The active-site For protease activity; shared with dimeric partner is D513. 2 dimerization of protease regions span residues G537–K543 and N576–P588. Residues E631–L821 enclose the Reverse transcriptase domain. The Mg(2+) site is built by D697, D772, and D773. The interval F814–H822 is RT 'primer grip'. Positions W985–W1001 match the Tryptophan repeat motif motif. The RNase H type-1 domain maps to I1021 to R1144. D1030, E1065, D1085, and D1136 together coordinate Mg(2+). The segment at D1150–Q1191 adopts an Integrase-type zinc-finger fold. H1159, H1163, C1187, and C1190 together coordinate Zn(2+). Residues V1201 to I1351 enclose the Integrase catalytic domain. Residues D1211, D1263, and E1299 each contribute to the Mg(2+) site. The segment at residues F1370–D1417 is a DNA-binding region (integrase-type).

Homotrimer; further assembles as hexamers of trimers. Interacts with gp41 (via C-terminus). Interacts with host CALM1; this interaction induces a conformational change in the Matrix protein, triggering exposure of the myristate group. Interacts with host AP3D1; this interaction allows the polyprotein trafficking to multivesicular bodies during virus assembly. Part of the pre-integration complex (PIC) which is composed of viral genome, matrix protein, Vpr and integrase. As to quaternary structure, homodimer; the homodimer further multimerizes as homohexamers or homopentamers. Interacts with human PPIA/CYPA; This interaction stabilizes the capsid. Interacts with human NUP153. Interacts with host PDZD8; this interaction stabilizes the capsid. Interacts with monkey TRIM5; this interaction destabilizes the capsid. In terms of assembly, homodimer, whose active site consists of two apposed aspartic acid residues. Heterodimer of p66 RT and p51 RT (RT p66/p51). Heterodimerization of RT is essential for DNA polymerase activity. The overall folding of the subdomains is similar in p66 RT and p51 RT but the spatial arrangements of the subdomains are dramatically different. As to quaternary structure, homotetramer; may further associate as a homohexadecamer. Part of the pre-integration complex (PIC) which is composed of viral genome, matrix protein, Vpr and integrase. Interacts with human SMARCB1/INI1 and human PSIP1/LEDGF isoform 1. Interacts with human KPNA3; this interaction might play a role in nuclear import of the pre-integration complex. Interacts with human NUP153; this interaction might play a role in nuclear import of the pre-integration complex. Mg(2+) is required as a cofactor. In terms of processing, specific enzymatic cleavages by the viral protease yield mature proteins. The protease is released by autocatalytic cleavage. The polyprotein is cleaved during and after budding, this process is termed maturation. Proteolytic cleavage of p66 RT removes the RNase H domain to yield the p51 RT subunit. Nucleocapsid protein p7 might be further cleaved after virus entry. Tyrosine phosphorylated presumably in the virion by a host kinase. Phosphorylation is apparently not a major regulator of membrane association. Post-translationally, phosphorylated possibly by host MAPK1; this phosphorylation is necessary for Pin1-mediated virion uncoating. In terms of processing, methylated by host PRMT6, impairing its function by reducing RNA annealing and the initiation of reverse transcription.

Its subcellular location is the host cell membrane. The protein resides in the host endosome. The protein localises to the host multivesicular body. It localises to the virion membrane. It is found in the host nucleus. Its subcellular location is the host cytoplasm. The protein resides in the virion. It catalyses the reaction Specific for a P1 residue that is hydrophobic, and P1' variable, but often Pro.. The catalysed reaction is Endohydrolysis of RNA in RNA/DNA hybrids. Three different cleavage modes: 1. sequence-specific internal cleavage of RNA. Human immunodeficiency virus type 1 and Moloney murine leukemia virus enzymes prefer to cleave the RNA strand one nucleotide away from the RNA-DNA junction. 2. RNA 5'-end directed cleavage 13-19 nucleotides from the RNA end. 3. DNA 3'-end directed cleavage 15-20 nucleotides away from the primer terminus.. It carries out the reaction 3'-end directed exonucleolytic cleavage of viral RNA-DNA hybrid.. The enzyme catalyses DNA(n) + a 2'-deoxyribonucleoside 5'-triphosphate = DNA(n+1) + diphosphate. With respect to regulation, protease: The viral protease is inhibited by many synthetic protease inhibitors (PIs), such as amprenavir, atazanavir, indinavir, loprinavir, nelfinavir, ritonavir and saquinavir. Use of protease inhibitors in tritherapy regimens permit more ambitious therapeutic strategies. Reverse transcriptase/ribonuclease H: RT can be inhibited either by nucleoside RT inhibitors (NRTIs) or by non nucleoside RT inhibitors (NNRTIs). NRTIs act as chain terminators, whereas NNRTIs inhibit DNA polymerization by binding a small hydrophobic pocket near the RT active site and inducing an allosteric change in this region. Classical NRTIs are abacavir, adefovir (PMEA), didanosine (ddI), lamivudine (3TC), stavudine (d4T), tenofovir (PMPA), zalcitabine (ddC), and zidovudine (AZT). Classical NNRTIs are atevirdine (BHAP U-87201E), delavirdine, efavirenz (DMP-266), emivirine (I-EBU), and nevirapine (BI-RG-587). The tritherapies used as a basic effective treatment of AIDS associate two NRTIs and one NNRTI. Mediates, with Gag polyprotein, the essential events in virion assembly, including binding the plasma membrane, making the protein-protein interactions necessary to create spherical particles, recruiting the viral Env proteins, and packaging the genomic RNA via direct interactions with the RNA packaging sequence (Psi). Gag-Pol polyprotein may regulate its own translation, by the binding genomic RNA in the 5'-UTR. At low concentration, the polyprotein would promote translation, whereas at high concentration, the polyprotein would encapsidate genomic RNA and then shut off translation. Functionally, targets the polyprotein to the plasma membrane via a multipartite membrane-binding signal, that includes its myristoylated N-terminus. Matrix protein is part of the pre-integration complex. Implicated in the release from host cell mediated by Vpu. Binds to RNA. Its function is as follows. Forms the conical core that encapsulates the genomic RNA-nucleocapsid complex in the virion. Most core are conical, with only 7% tubular. The core is constituted by capsid protein hexamer subunits. The core is disassembled soon after virion entry. Host restriction factors such as TRIM5-alpha or TRIMCyp bind retroviral capsids and cause premature capsid disassembly, leading to blocks in reverse transcription. Capsid restriction by TRIM5 is one of the factors which restricts HIV-1 to the human species. Host PIN1 apparently facilitates the virion uncoating. On the other hand, interactions with PDZD8 or CYPA stabilize the capsid. In terms of biological role, encapsulates and protects viral dimeric unspliced genomic RNA (gRNA). Binds these RNAs through its zinc fingers. Acts as a nucleic acid chaperone which is involved in rearangement of nucleic acid secondary structure during gRNA retrotranscription. Also facilitates template switch leading to recombination. As part of the polyprotein, participates in gRNA dimerization, packaging, tRNA incorporation and virion assembly. Aspartyl protease that mediates proteolytic cleavages of Gag and Gag-Pol polyproteins during or shortly after the release of the virion from the plasma membrane. Cleavages take place as an ordered, step-wise cascade to yield mature proteins. This process is called maturation. Displays maximal activity during the budding process just prior to particle release from the cell. Also cleaves Nef and Vif, probably concomitantly with viral structural proteins on maturation of virus particles. Hydrolyzes host EIF4GI and PABP1 in order to shut off the capped cellular mRNA translation. The resulting inhibition of cellular protein synthesis serves to ensure maximal viral gene expression and to evade host immune response. Also mediates cleavage of host YTHDF3. Mediates cleavage of host CARD8, thereby activating the CARD8 inflammasome, leading to the clearance of latent HIV-1 in patient CD4(+) T-cells after viral reactivation; in contrast, HIV-1 can evade CARD8-sensing when its protease remains inactive in infected cells prior to viral budding. Functionally, multifunctional enzyme that converts the viral RNA genome into dsDNA in the cytoplasm, shortly after virus entry into the cell. This enzyme displays a DNA polymerase activity that can copy either DNA or RNA templates, and a ribonuclease H (RNase H) activity that cleaves the RNA strand of RNA-DNA heteroduplexes in a partially processive 3' to 5' endonucleasic mode. Conversion of viral genomic RNA into dsDNA requires many steps. A tRNA(3)-Lys binds to the primer-binding site (PBS) situated at the 5'-end of the viral RNA. RT uses the 3' end of the tRNA primer to perform a short round of RNA-dependent minus-strand DNA synthesis. The reading proceeds through the U5 region and ends after the repeated (R) region which is present at both ends of viral RNA. The portion of the RNA-DNA heteroduplex is digested by the RNase H, resulting in a ssDNA product attached to the tRNA primer. This ssDNA/tRNA hybridizes with the identical R region situated at the 3' end of viral RNA. This template exchange, known as minus-strand DNA strong stop transfer, can be either intra- or intermolecular. RT uses the 3' end of this newly synthesized short ssDNA to perform the RNA-dependent minus-strand DNA synthesis of the whole template. RNase H digests the RNA template except for two polypurine tracts (PPTs) situated at the 5'-end and near the center of the genome. It is not clear if both polymerase and RNase H activities are simultaneous. RNase H probably can proceed both in a polymerase-dependent (RNA cut into small fragments by the same RT performing DNA synthesis) and a polymerase-independent mode (cleavage of remaining RNA fragments by free RTs). Secondly, RT performs DNA-directed plus-strand DNA synthesis using the PPTs that have not been removed by RNase H as primers. PPTs and tRNA primers are then removed by RNase H. The 3' and 5' ssDNA PBS regions hybridize to form a circular dsDNA intermediate. Strand displacement synthesis by RT to the PBS and PPT ends produces a blunt ended, linear dsDNA copy of the viral genome that includes long terminal repeats (LTRs) at both ends. Its function is as follows. Catalyzes viral DNA integration into the host chromosome, by performing a series of DNA cutting and joining reactions. This enzyme activity takes place after virion entry into a cell and reverse transcription of the RNA genome in dsDNA. The first step in the integration process is 3' processing. This step requires a complex comprising the viral genome, matrix protein, Vpr and integrase. This complex is called the pre-integration complex (PIC). The integrase protein removes 2 nucleotides from each 3' end of the viral DNA, leaving recessed CA OH's at the 3' ends. In the second step, the PIC enters cell nucleus. This process is mediated through integrase and Vpr proteins, and allows the virus to infect a non dividing cell. This ability to enter the nucleus is specific of lentiviruses, other retroviruses cannot and rely on cell division to access cell chromosomes. In the third step, termed strand transfer, the integrase protein joins the previously processed 3' ends to the 5' ends of strands of target cellular DNA at the site of integration. The 5'-ends are produced by integrase-catalyzed staggered cuts, 5 bp apart. A Y-shaped, gapped, recombination intermediate results, with the 5'-ends of the viral DNA strands and the 3' ends of target DNA strands remaining unjoined, flanking a gap of 5 bp. The last step is viral DNA integration into host chromosome. This involves host DNA repair synthesis in which the 5 bp gaps between the unjoined strands are filled in and then ligated. Since this process occurs at both cuts flanking the HIV genome, a 5 bp duplication of host DNA is produced at the ends of HIV-1 integration. Alternatively, Integrase may catalyze the excision of viral DNA just after strand transfer, this is termed disintegration. This is Gag-Pol polyprotein (gag-pol) from Human immunodeficiency virus type 1 group M subtype D (isolate ELI) (HIV-1).